A 205-amino-acid chain; its full sequence is High frequency lysogenization protein HflD homolog (205 aa).

Belongs to the HflD family.

It localises to the cytoplasm. It is found in the cell inner membrane. In Shewanella pealeana (strain ATCC 700345 / ANG-SQ1), this protein is High frequency lysogenization protein HflD homolog.